We begin with the raw amino-acid sequence, 362 residues long: Adenosine deaminase (362 aa).

Residues His19 and His21 each coordinate Zn(2+). Residues His21, Asp23, and Gly181 each contribute to the substrate site. His208 serves as a coordination point for Zn(2+). Glu211 (proton donor) is an active-site residue. Asp300 serves as a coordination point for Zn(2+).

It belongs to the metallo-dependent hydrolases superfamily. Adenosine and AMP deaminases family. Adenosine deaminase subfamily. Zn(2+) is required as a cofactor.

The catalysed reaction is adenosine + H2O + H(+) = inosine + NH4(+). It carries out the reaction 2'-deoxyadenosine + H2O + H(+) = 2'-deoxyinosine + NH4(+). Its function is as follows. Catalyzes the hydrolytic deamination of adenosine and 2-deoxyadenosine. The sequence is that of Adenosine deaminase from Mycobacterium ulcerans (strain Agy99).